Here is a 310-residue protein sequence, read N- to C-terminus: Nucleotide-binding protein MAP_1147 (310 aa).

Residue 30–37 (GLSGAGRG) coordinates ATP. GTP is bound at residue 81 to 84 (DVRS).

This sequence belongs to the RapZ-like family.

Displays ATPase and GTPase activities. This is Nucleotide-binding protein MAP_1147 from Mycolicibacterium paratuberculosis (strain ATCC BAA-968 / K-10) (Mycobacterium paratuberculosis).